Here is a 172-residue protein sequence, read N- to C-terminus: Ribosome maturation factor RimM (172 aa).

Residues 96-168 (EGEFYYHQII…RVDVELMEGL (73 aa)) enclose the PRC barrel domain.

This sequence belongs to the RimM family. In terms of assembly, binds ribosomal protein uS19.

The protein localises to the cytoplasm. In terms of biological role, an accessory protein needed during the final step in the assembly of 30S ribosomal subunit, possibly for assembly of the head region. Essential for efficient processing of 16S rRNA. May be needed both before and after RbfA during the maturation of 16S rRNA. It has affinity for free ribosomal 30S subunits but not for 70S ribosomes. The protein is Ribosome maturation factor RimM of Streptococcus pyogenes serotype M3 (strain ATCC BAA-595 / MGAS315).